A 1331-amino-acid polypeptide reads, in one-letter code: DNA-directed RNA polymerase subunit beta' (1331 aa).

Positions 220, 293, 300, and 303 each coordinate Zn(2+). Disordered regions lie at residues 1236-1257 (DFVD…TNDN) and 1294-1331 (ISGD…MKDQ). The span at 1243-1257 (SRSPNGYSNVVTNDN) shows a compositional bias: polar residues.

The protein belongs to the RNA polymerase beta' chain family. RpoC2 subfamily. As to quaternary structure, in cyanobacteria the RNAP catalytic core is composed of 2 alpha, 1 beta, 1 beta', 1 gamma and 1 omega subunit. When a sigma factor is associated with the core the holoenzyme is formed, which can initiate transcription. Requires Zn(2+) as cofactor.

It carries out the reaction RNA(n) + a ribonucleoside 5'-triphosphate = RNA(n+1) + diphosphate. Functionally, DNA-dependent RNA polymerase catalyzes the transcription of DNA into RNA using the four ribonucleoside triphosphates as substrates. The chain is DNA-directed RNA polymerase subunit beta' from Picosynechococcus sp. (strain ATCC 27264 / PCC 7002 / PR-6) (Agmenellum quadruplicatum).